The following is a 176-amino-acid chain: Nucleoside triphosphate/diphosphate phosphatase (176 aa).

Arginine 23 serves as the catalytic Proton donor. Mg(2+) contacts are provided by asparagine 87, aspartate 103, aspartate 105, aspartate 107, aspartate 120, and glutamate 123.

It belongs to the Ntdp family. Mg(2+) is required as a cofactor.

It catalyses the reaction a ribonucleoside 5'-triphosphate + H2O = a ribonucleoside 5'-diphosphate + phosphate + H(+). The enzyme catalyses a ribonucleoside 5'-diphosphate + H2O = a ribonucleoside 5'-phosphate + phosphate + H(+). Its function is as follows. Has nucleoside phosphatase activity towards nucleoside triphosphates and nucleoside diphosphates. This Lactococcus lactis subsp. cremoris (strain MG1363) protein is Nucleoside triphosphate/diphosphate phosphatase.